The following is a 765-amino-acid chain: Transcription factor RFX3 (765 aa).

A DNA-binding region (RFX-type winged-helix) is located at residues His-189–Pro-264.

It belongs to the RFX family.

It is found in the nucleus. Its function is as follows. Transcription factor required for ciliogenesis and islet cell differentiation during endocrine pancreas development. This Danio rerio (Zebrafish) protein is Transcription factor RFX3 (rfx3).